A 271-amino-acid polypeptide reads, in one-letter code: ATP synthase subunit a (271 aa).

5 consecutive transmembrane segments (helical) span residues 38 to 58 (FWTL…LFLA), 100 to 120 (LIAP…LMDL), 146 to 166 (DVNI…FYSI), 220 to 240 (LIFI…LNVP), and 242 to 262 (AIFH…LTIV).

This sequence belongs to the ATPase A chain family. In terms of assembly, F-type ATPases have 2 components, CF(1) - the catalytic core - and CF(0) - the membrane proton channel. CF(1) has five subunits: alpha(3), beta(3), gamma(1), delta(1), epsilon(1). CF(0) has three main subunits: a(1), b(2) and c(9-12). The alpha and beta chains form an alternating ring which encloses part of the gamma chain. CF(1) is attached to CF(0) by a central stalk formed by the gamma and epsilon chains, while a peripheral stalk is formed by the delta and b chains.

Its subcellular location is the cell inner membrane. Functionally, key component of the proton channel; it plays a direct role in the translocation of protons across the membrane. This chain is ATP synthase subunit a, found in Enterobacter sp. (strain 638).